The following is a 1177-amino-acid chain: Tyrosine-protein kinase hopscotch (1177 aa).

Positions 1 to 41 (MALANGGEDRMDDSSSGRTSLADSASLTNSSLRSGTSSQSI) are disordered. The span at 16–41 (SGRTSLADSASLTNSSLRSGTSSQSI) shows a compositional bias: polar residues. 2 positions are modified to phosphoserine: Ser-40 and Ser-321. In terms of domain architecture, FERM spans 46–414 (GTIRVFNFTT…IYIRLSSKWM (369 aa)). Residues 433–539 (HCHGPIGGAY…YRIPASKYDK (107 aa)) form the SH2; atypical domain. Protein kinase domains lie at 582–843 (YPDS…AEIL) and 892–1164 (YNME…HPTD). Residues 898–906 (IGRGHYGTV) and Lys-926 each bind ATP. Asp-1014 serves as the catalytic Proton acceptor. 2 positions are modified to phosphotyrosine; by autocatalysis: Tyr-1047 and Tyr-1048. The disordered stretch occupies residues 1158 to 1177 (KVTHPTDGHQSPPNQPTDAE).

This sequence belongs to the protein kinase superfamily. Tyr protein kinase family. JAK subfamily. Forms a complex with Hsp83 and piwi; probably Hop mediates the interaction between piwi and Hsp83.

It localises to the endomembrane system. The catalysed reaction is L-tyrosyl-[protein] + ATP = O-phospho-L-tyrosyl-[protein] + ADP + H(+). Tyrosine kinase of the non-receptor type, phosphorylates the marelle protein. Required maternally for the establishment of the normal array of embryonic segments: involved in the control of pair-rule gene transcription in a stripe-specific manner. Together with Hsp83 and piwi, mediates canalization, also known as developmental robustness, likely via epigenetic silencing of existing genetic variants and suppression of transposon-induced new genetic variation. This chain is Tyrosine-protein kinase hopscotch (hop), found in Drosophila melanogaster (Fruit fly).